The primary structure comprises 1024 residues: NLR family CARD domain-containing protein 4 (1024 aa).

Residues 1-88 (MNFIRNNRRA…FVYQDLTGQN (88 aa)) form the CARD domain. The segment at 95-298 (EEDLNVLAQN…HVGALTAEVG (204 aa)) is nucleotide-binding domain (NBD). Residues threonine 135, 172–177 (GKGKST), and histidine 443 contribute to the ATP site. In terms of domain architecture, NACHT spans 163-476 (SPCLIEGESG…VSKGNSYLNK (314 aa)). The winged-helix domain (WHD) stretch occupies residues 356–463 (AHTQTMLFQT…RLSSLLTSKE (108 aa)). A Phosphoserine modification is found at serine 533. LRR repeat units lie at residues 578–598 (FFQGKSLYINSENIPDYLFDF), 656–679 (KQEFKTLEVTLRDINKLNKQDIKY), 735–758 (VTGLQNLSIHRLHTQQLPGGLIDS), 762–785 (LKNLERLILDDIRMNEEDAKNLAE), 787–812 (LRSLKKMRLLHLTHLSDIGEGMDYIV), 824–847 (EMKLVACCLTANSVKVLAQNLHNL), 848–870 (IKLSILDISENYLEKDGNEALQE), 878–902 (LGELTTLMLPWCWDVHTSLPKLLKQ), 911–933 (KLGLKNWRLRDEEIKSLGEFLEM), 936–963 (LRDLQQLDLAGHCVSSDGWLYFMNVFEN), 965–985 (KQLVFFDFSTEEFLPDAALVR), and 999–1021 (EVKLTGWEFDDYDISAIKGTFKL).

Homooligomer; homooligomerizes following activation of Naip proteins by pathogenic proteins such as S.typhimurium (Salmonella) flagellin or PrgJ. Component of the NLRC4 inflammasome, at least composed of NLRC4, caspase-1 (CASP1) and some NAIP protein (Naip, Naip2 or Naip5). Interacts with Naip5 and Naip6; following Naip5 and Naip6 engagement by Salmonella flagellin. Interacts with Naip2; following Naip2 engagement by Salmonella PrgJ. The inflammasome is a huge complex that contains multiple copies of NLRC4 and a single Naip protein chain. Some NLRC4 inflammasomes contain PYCARD/ASC, while some others directly contact and activate CASP1. Interacts with EIF2AK2/PKR. In terms of processing, phosphorylated at Ser-533 following infection of macrophages with S.typhimurium (Salmonella). Phosphorylation is essential for NLRC4 inflammasome function to promote caspase-1 activation and pyroptosis. PRKCD phosphorylates Ser-533 in vitro. As to expression, expressed by intestinal mononuclear phagocytes.

The protein localises to the cytoplasm. The protein resides in the cytosol. Its subcellular location is the inflammasome. In terms of biological role, key component of inflammasomes that indirectly senses specific proteins from pathogenic bacteria and fungi and responds by assembling an inflammasome complex that promotes caspase-1 activation, cytokine production and macrophage pyroptosis. The NLRC4 inflammasome is activated as part of the innate immune response to a range of intracellular bacteria. It senses pathogenic proteins of the type III secretion system (T3SS) and type IV secretion system (T4SS) such as flagellin and PrgJ-like rod proteins via the Naip proteins (Naip1, Naip2 or Naip5): specific Naip proteins recognize and bind pathogenic proteins, driving assembly and activation of the NLRC4 inflammasome. The NLRC4 inflammasome senses Gram-negative bacteria such as L.pneumophila and P.aeruginosa, enteric pathogens S.typhimurium (Salmonella) and S.flexneri and fungal pathogen C.albicans. In intestine, the NLRC4 inflammasome is able to discriminate between commensal and pathogenic bacteria and specifically drives production of interleukin-1 beta (IL1B) in response to infection by Salmonella or P.aeruginosa. In case of L.pneumophila infection the inflammasome acts by activating caspase-7. This Mus musculus (Mouse) protein is NLR family CARD domain-containing protein 4 (Nlrc4).